The chain runs to 413 residues: Multifunctional CCA protein (413 aa).

2 residues coordinate ATP: Gly-8 and Arg-11. The CTP site is built by Gly-8 and Arg-11. 2 residues coordinate Mg(2+): Asp-21 and Asp-23. 3 residues coordinate ATP: Arg-91, Arg-137, and Arg-140. Arg-91, Arg-137, and Arg-140 together coordinate CTP. Residues 228 to 329 (TGVHTLMTLS…VKLFDAIDAW (102 aa)) enclose the HD domain.

It belongs to the tRNA nucleotidyltransferase/poly(A) polymerase family. Bacterial CCA-adding enzyme type 1 subfamily. As to quaternary structure, monomer. Can also form homodimers and oligomers. Requires Mg(2+) as cofactor. It depends on Ni(2+) as a cofactor.

It carries out the reaction a tRNA precursor + 2 CTP + ATP = a tRNA with a 3' CCA end + 3 diphosphate. The catalysed reaction is a tRNA with a 3' CCA end + 2 CTP + ATP = a tRNA with a 3' CCACCA end + 3 diphosphate. In terms of biological role, catalyzes the addition and repair of the essential 3'-terminal CCA sequence in tRNAs without using a nucleic acid template. Adds these three nucleotides in the order of C, C, and A to the tRNA nucleotide-73, using CTP and ATP as substrates and producing inorganic pyrophosphate. tRNA 3'-terminal CCA addition is required both for tRNA processing and repair. Also involved in tRNA surveillance by mediating tandem CCA addition to generate a CCACCA at the 3' terminus of unstable tRNAs. While stable tRNAs receive only 3'-terminal CCA, unstable tRNAs are marked with CCACCA and rapidly degraded. The sequence is that of Multifunctional CCA protein from Salmonella agona (strain SL483).